The sequence spans 132 residues: Glycine cleavage system H protein (132 aa).

The 83-residue stretch at 24-106 (RVRVGITDYA…YGAGWLFELE (83 aa)) folds into the Lipoyl-binding domain. Lysine 65 bears the N6-lipoyllysine mark.

Belongs to the GcvH family. In terms of assembly, the glycine cleavage system is composed of four proteins: P, T, L and H. Requires (R)-lipoate as cofactor.

In terms of biological role, the glycine cleavage system catalyzes the degradation of glycine. The H protein shuttles the methylamine group of glycine from the P protein to the T protein. The sequence is that of Glycine cleavage system H protein from Nocardia farcinica (strain IFM 10152).